We begin with the raw amino-acid sequence, 213 residues long: Insulin-like peptide INSL6 (213 aa).

The signal sequence occupies residues 1–20 (MPRLLRLSLLWLGLLLVRFS). Intrachain disulfides connect Cys33–Cys179, Cys45–Cys192, and Cys178–Cys183. Positions 55–168 (FEEETPFSRL…SNLFWGHHPQ (114 aa)) are cleaved as a propeptide — connecting peptide. Positions 201–213 (LKEKRSSLVTKIY) are excised as a propeptide.

Belongs to the insulin family. As to expression, testis specific.

The protein resides in the secreted. In terms of biological role, may have a role in sperm development and fertilization. This Homo sapiens (Human) protein is Insulin-like peptide INSL6 (INSL6).